The following is a 142-amino-acid chain: 3-hydroxyacyl-[acyl-carrier-protein] dehydratase FabZ (142 aa).

Histidine 50 is an active-site residue.

Belongs to the thioester dehydratase family. FabZ subfamily.

Its subcellular location is the cytoplasm. The catalysed reaction is a (3R)-hydroxyacyl-[ACP] = a (2E)-enoyl-[ACP] + H2O. In terms of biological role, involved in unsaturated fatty acids biosynthesis. Catalyzes the dehydration of short chain beta-hydroxyacyl-ACPs and long chain saturated and unsaturated beta-hydroxyacyl-ACPs. The protein is 3-hydroxyacyl-[acyl-carrier-protein] dehydratase FabZ of Clostridium tetani (strain Massachusetts / E88).